Reading from the N-terminus, the 141-residue chain is Large ribosomal subunit protein uL16 (141 aa).

Basic residues predominate over residues 1–17 (MLQPKRTKYRKVQKGKM). A disordered region spans residues 1–29 (MLQPKRTKYRKVQKGKMKGNSQRGHELSN).

The protein belongs to the universal ribosomal protein uL16 family. In terms of assembly, part of the 50S ribosomal subunit.

Its function is as follows. Binds 23S rRNA and is also seen to make contacts with the A and possibly P site tRNAs. The chain is Large ribosomal subunit protein uL16 from Flavobacterium psychrophilum (strain ATCC 49511 / DSM 21280 / CIP 103535 / JIP02/86).